The chain runs to 276 residues: NH(3)-dependent NAD(+) synthetase (276 aa).

Residue 43 to 50 coordinates ATP; the sequence is GISGGVDS. Asp-49 contacts Mg(2+). Residue Arg-146 coordinates deamido-NAD(+). Position 166 (Thr-166) interacts with ATP. Mg(2+) is bound at residue Glu-171. Residues Lys-179 and Asp-186 each coordinate deamido-NAD(+). ATP contacts are provided by Lys-195 and Thr-217. 266-267 is a binding site for deamido-NAD(+); sequence HK.

The protein belongs to the NAD synthetase family. In terms of assembly, homodimer.

It catalyses the reaction deamido-NAD(+) + NH4(+) + ATP = AMP + diphosphate + NAD(+) + H(+). The protein operates within cofactor biosynthesis; NAD(+) biosynthesis; NAD(+) from deamido-NAD(+) (ammonia route): step 1/1. Its function is as follows. Catalyzes the ATP-dependent amidation of deamido-NAD to form NAD. Uses ammonia as a nitrogen source. This is NH(3)-dependent NAD(+) synthetase from Shewanella frigidimarina (strain NCIMB 400).